The primary structure comprises 588 residues: DELLA protein GAI (588 aa).

The span at 1-15 shows a compositional bias: basic and acidic residues; the sequence is MKRDRDRDREREKRA. A disordered region spans residues 1–38; the sequence is MKRDRDRDREREKRAFSNGAVSSGKSKIWEEDEEEKPD. The DELLA motif motif lies at 42–46; that stretch reads DELLA. The interval 152–177 is disordered; that stretch reads GAVFNSDSNKRHRSTTSSFSTTSSSM. Positions 166-177 are enriched in low complexity; the sequence is TTSSFSTTSSSM. The region spanning 190–574 is the GRAS domain; that stretch reads VDSQETGVRL…RPLIATSAWK (385 aa). The tract at residues 197–251 is leucine repeat I (LRI); sequence VRLVHTLMACAEAVQQENLTLADQLVRHIGILAVSQSGAMRKVATYFAEALARRI. The interval 269–334 is VHIID; the sequence is QMHFYETCPY…GGPPAFRLTG (66 aa). The short motif at 300-304 is the VHIID element; sequence VHVID. The segment at 348–380 is leucine repeat II (LRII); that stretch reads QVGWKLAQLAETIGVEFEFRGFVANSLADLDAT. Positions 392-495 are PFYRE; sequence VAINSVFELH…EVYLGRQICN (104 aa). Positions 400–404 match the LXXLL motif motif; it reads LHRLL. The SAW stretch occupies residues 498–574; the sequence is ACEGSDRVER…RPLIATSAWK (77 aa).

Belongs to the GRAS family. DELLA subfamily. Phosphorylated. In terms of processing, ubiquitinated. Upon GA application it is ubiquitinated, leading to its subsequent degradation. In terms of tissue distribution, expressed in both vegetative and reproductive tissues.

It localises to the nucleus. In terms of biological role, probable transcriptional regulator that acts as a repressor of the gibberellin (GA) signaling pathway. Probably acts by participating in large multiprotein complexes that repress transcription of GA-inducible genes. Upon GA application, it is degraded by the proteasome, allowing the GA signaling pathway. Its degradation is not essential for germination. The protein is DELLA protein GAI (GAI) of Solanum lycopersicum (Tomato).